Here is a 338-residue protein sequence, read N- to C-terminus: Ornithine carbamoyltransferase (338 aa).

Residues 56-59 (STRT), Arg-107, and 134-137 (HPTQ) each bind carbamoyl phosphate. L-ornithine-binding positions include Asn-168, Asp-232, and 236–237 (SM). Carbamoyl phosphate contacts are provided by residues 274–275 (CL) and Arg-320.

Belongs to the aspartate/ornithine carbamoyltransferase superfamily. OTCase family.

It is found in the cytoplasm. It carries out the reaction carbamoyl phosphate + L-ornithine = L-citrulline + phosphate + H(+). It functions in the pathway amino-acid biosynthesis; L-arginine biosynthesis; L-arginine from L-ornithine and carbamoyl phosphate: step 1/3. Its function is as follows. Reversibly catalyzes the transfer of the carbamoyl group from carbamoyl phosphate (CP) to the N(epsilon) atom of ornithine (ORN) to produce L-citrulline. The polypeptide is Ornithine carbamoyltransferase (argI) (Buchnera aphidicola subsp. Schizaphis graminum (strain Sg)).